The primary structure comprises 320 residues: D-amino-acid oxidase (320 aa).

FAD is bound by residues alanine 13, glycine 14, valine 15, threonine 42, threonine 43, serine 44, glycine 48, and alanine 49. Residues tyrosine 220 and arginine 274 each coordinate D-proline. D-serine contacts are provided by tyrosine 220 and arginine 274. Arginine 274, glycine 299, glycine 300, glycine 302, and threonine 304 together coordinate FAD. A D-proline-binding site is contributed by glycine 300. Glycine 300 serves as a coordination point for D-serine.

Belongs to the DAMOX/DASOX family. Requires FAD as cofactor.

It localises to the cytoplasm. The protein localises to the secreted. It is found in the cell wall. The catalysed reaction is a D-alpha-amino acid + O2 + H2O = a 2-oxocarboxylate + H2O2 + NH4(+). Catalyzes the oxidative deamination of D-amino acids with broad substrate specificity. Enables the organism to utilize D-amino acids as a source of nutrients. Enables the organism to utilize glycine as a carbon source. This is D-amino-acid oxidase from Mycobacterium tuberculosis (strain ATCC 25177 / H37Ra).